The chain runs to 252 residues: Imidazole glycerol phosphate synthase subunit HisF (252 aa).

Catalysis depends on residues D13 and D132.

This sequence belongs to the HisA/HisF family. In terms of assembly, heterodimer of HisH and HisF.

Its subcellular location is the cytoplasm. The catalysed reaction is 5-[(5-phospho-1-deoxy-D-ribulos-1-ylimino)methylamino]-1-(5-phospho-beta-D-ribosyl)imidazole-4-carboxamide + L-glutamine = D-erythro-1-(imidazol-4-yl)glycerol 3-phosphate + 5-amino-1-(5-phospho-beta-D-ribosyl)imidazole-4-carboxamide + L-glutamate + H(+). It functions in the pathway amino-acid biosynthesis; L-histidine biosynthesis; L-histidine from 5-phospho-alpha-D-ribose 1-diphosphate: step 5/9. IGPS catalyzes the conversion of PRFAR and glutamine to IGP, AICAR and glutamate. The HisF subunit catalyzes the cyclization activity that produces IGP and AICAR from PRFAR using the ammonia provided by the HisH subunit. In Campylobacter hominis (strain ATCC BAA-381 / DSM 21671 / CCUG 45161 / LMG 19568 / NCTC 13146 / CH001A), this protein is Imidazole glycerol phosphate synthase subunit HisF.